Here is a 258-residue protein sequence, read N- to C-terminus: F-box/SPRY domain-containing protein 1 (258 aa).

One can recognise an F-box domain in the interval Thr6–Gln54. The B30.2/SPRY domain occupies Phe64–Leu256.

It belongs to the FBXO45/Fsn family. In terms of assembly, component of an E3 ubiquitin ligase complex composed of hiw and Fsn.

It localises to the synapse. Its pathway is protein modification; protein ubiquitination. In terms of biological role, required in the presynaptic motoneuron to down-regulate the levels of wnd and restrain synaptic terminal growth at the neuromuscular junction (NMJ). This is F-box/SPRY domain-containing protein 1 from Culex quinquefasciatus (Southern house mosquito).